A 361-amino-acid polypeptide reads, in one-letter code: Phenylalanine--tRNA ligase alpha subunit (361 aa).

Glu-260 contributes to the Mg(2+) binding site.

The protein belongs to the class-II aminoacyl-tRNA synthetase family. Phe-tRNA synthetase alpha subunit type 1 subfamily. As to quaternary structure, tetramer of two alpha and two beta subunits. The cofactor is Mg(2+).

The protein localises to the cytoplasm. The catalysed reaction is tRNA(Phe) + L-phenylalanine + ATP = L-phenylalanyl-tRNA(Phe) + AMP + diphosphate + H(+). This Chelativorans sp. (strain BNC1) protein is Phenylalanine--tRNA ligase alpha subunit.